The following is a 357-amino-acid chain: 3-isopropylmalate dehydrogenase (357 aa).

Substrate-binding residues include R97, R107, R135, and D224. The Mg(2+) site is built by D224, D248, and D252. Position 282-294 (282-294 (GSAPDIAGQDKAN)) interacts with NAD(+).

The protein belongs to the isocitrate and isopropylmalate dehydrogenases family. LeuB type 1 subfamily. As to quaternary structure, homodimer. The cofactor is Mg(2+). Requires Mn(2+) as cofactor.

It localises to the cytoplasm. It carries out the reaction (2R,3S)-3-isopropylmalate + NAD(+) = 4-methyl-2-oxopentanoate + CO2 + NADH. It functions in the pathway amino-acid biosynthesis; L-leucine biosynthesis; L-leucine from 3-methyl-2-oxobutanoate: step 3/4. In terms of biological role, catalyzes the oxidation of 3-carboxy-2-hydroxy-4-methylpentanoate (3-isopropylmalate) to 3-carboxy-4-methyl-2-oxopentanoate. The product decarboxylates to 4-methyl-2 oxopentanoate. This is 3-isopropylmalate dehydrogenase from Parasynechococcus marenigrum (strain WH8102).